Consider the following 129-residue polypeptide: Gene 58 protein (129 aa).

A disordered region spans residues 87–129 (GNIPVQRKPARKPSRRVFGESRSSGSSGSTVRPGIRGRSTPWS). Over residues 106 to 115 (ESRSSGSSGS) the composition is skewed to low complexity.

This chain is Gene 58 protein (58), found in Mycobacterium (Mycobacteriophage D29).